Here is a 450-residue protein sequence, read N- to C-terminus: Tubulin alpha chain (450 aa).

Glutamine 11 is a GTP binding site. The residue at position 40 (lysine 40) is an N6-acetyllysine. 7 residues coordinate GTP: glutamate 71, serine 140, glycine 144, threonine 145, threonine 179, asparagine 206, and asparagine 228. Residue glutamate 71 coordinates Mg(2+). Glutamate 254 is an active-site residue.

It belongs to the tubulin family. Dimer of alpha and beta chains. A typical microtubule is a hollow water-filled tube with an outer diameter of 25 nm and an inner diameter of 15 nM. Alpha-beta heterodimers associate head-to-tail to form protofilaments running lengthwise along the microtubule wall with the beta-tubulin subunit facing the microtubule plus end conferring a structural polarity. Microtubules usually have 13 protofilaments but different protofilament numbers can be found in some organisms and specialized cells. Mg(2+) is required as a cofactor. Undergoes a tyrosination/detyrosination cycle, the cyclic removal and re-addition of a C-terminal tyrosine residue by the enzymes tubulin tyrosine carboxypeptidase (TTCP) and tubulin tyrosine ligase (TTL), respectively. Post-translationally, acetylation of alpha chains at Lys-40 stabilizes microtubules and affects affinity and processivity of microtubule motors. This modification has a role in multiple cellular functions, ranging from cell motility, cell cycle progression or cell differentiation to intracellular trafficking and signaling.

The protein resides in the cytoplasm. The protein localises to the cytoskeleton. It carries out the reaction GTP + H2O = GDP + phosphate + H(+). Its function is as follows. Tubulin is the major constituent of microtubules, a cylinder consisting of laterally associated linear protofilaments composed of alpha- and beta-tubulin heterodimers. Microtubules grow by the addition of GTP-tubulin dimers to the microtubule end, where a stabilizing cap forms. Below the cap, tubulin dimers are in GDP-bound state, owing to GTPase activity of alpha-tubulin. The chain is Tubulin alpha chain from Lepidoglyphus destructor (Storage mite).